The sequence spans 255 residues: Geranylgeranylglyceryl phosphate synthase (255 aa).

Positions 31 and 60 each coordinate Mg(2+). Residues 179 to 185 (YLEAGSG), 211 to 212 (GG), and 233 to 234 (GT) each bind sn-glycerol 1-phosphate.

The protein belongs to the GGGP/HepGP synthase family. Group II subfamily. Requires Mg(2+) as cofactor.

Its subcellular location is the cytoplasm. It carries out the reaction sn-glycerol 1-phosphate + (2E,6E,10E)-geranylgeranyl diphosphate = sn-3-O-(geranylgeranyl)glycerol 1-phosphate + diphosphate. Its pathway is membrane lipid metabolism; glycerophospholipid metabolism. Prenyltransferase that catalyzes the transfer of the geranylgeranyl moiety of geranylgeranyl diphosphate (GGPP) to the C3 hydroxyl of sn-glycerol-1-phosphate (G1P). This reaction is the first ether-bond-formation step in the biosynthesis of archaeal membrane lipids. The sequence is that of Geranylgeranylglyceryl phosphate synthase from Methanothrix thermoacetophila (strain DSM 6194 / JCM 14653 / NBRC 101360 / PT) (Methanosaeta thermophila).